The primary structure comprises 374 residues: WW domain-binding protein 4 (374 aa).

The segment at 11-42 (KFCDYCKCWIADNRPSVEFHERGKNHKENVAR) adopts a Matrin-type zinc-finger fold. Positions 91-109 (EPTISPVTNTVQPTPTANQ) are enriched in polar residues. Disordered regions lie at residues 91-126 (EPTISPVTNTVQPTPTANQQKEKKKKKKKKEASKGR) and 188-328 (SKWE…EAGA). The segment covering 112-121 (EKKKKKKKKE) has biased composition (basic residues). 2 WW domains span residues 121–154 (EASKGRWVEGVTADGHCYYYDLVTGASQWEKPEG) and 162–195 (TAAKAIWVEGLSEDGYTYYYNTETGESKWEKPDD). 2 stretches are compositionally biased toward basic and acidic residues: residues 188 to 197 (SKWEKPDDFI) and 205 to 270 (SSKD…EKTT). S219, S226, and S228 each carry phosphoserine. Residues 315–325 (STENECLSSSE) are compositionally biased toward polar residues. Residues 355–373 (KKRRIENGKSRNLRQRGED) are interaction with SNRNP200.

Component of the spliceosome B complex. Associated with U2 snRNPs. Binds splicing factors SNRPB, SNRPC and SF1. Interacts via the WW domains with the Pro-rich domains of KHDRBS1/SAM68. Interacts via the WW domains with the Pro-rich domains of WBP11. Interacts with SNRNP200.

Its subcellular location is the nucleus. It localises to the nucleus speckle. Functionally, involved in pre-mRNA splicing as a component of the spliceosome. May play a role in cross-intron bridging of U1 and U2 snRNPs in the mammalian A complex. The chain is WW domain-binding protein 4 (Wbp4) from Rattus norvegicus (Rat).